Consider the following 283-residue polypeptide: Protoheme IX farnesyltransferase (283 aa).

A run of 9 helical transmembrane segments spans residues 6–26, 35–55, 85–105, 106–126, 131–151, 160–180, 207–227, 230–250, and 262–282; these read LLLT…AGFL, FGLF…GCVF, AIVF…FYTN, LLTL…YSIW, VYGT…GYCA, AFIL…SIAI, ILLY…FHFT, LYLI…LRGL, and MFRF…FDLV.

Belongs to the UbiA prenyltransferase family. Protoheme IX farnesyltransferase subfamily.

The protein localises to the cell inner membrane. It carries out the reaction heme b + (2E,6E)-farnesyl diphosphate + H2O = Fe(II)-heme o + diphosphate. Its pathway is porphyrin-containing compound metabolism; heme O biosynthesis; heme O from protoheme: step 1/1. Its function is as follows. Converts heme B (protoheme IX) to heme O by substitution of the vinyl group on carbon 2 of heme B porphyrin ring with a hydroxyethyl farnesyl side group. The protein is Protoheme IX farnesyltransferase of Protochlamydia amoebophila (strain UWE25).